The sequence spans 410 residues: Phosphopentomutase (410 aa).

The Mn(2+) site is built by aspartate 10, aspartate 309, histidine 314, aspartate 350, histidine 351, and histidine 362.

This sequence belongs to the phosphopentomutase family. Requires Mn(2+) as cofactor.

The protein localises to the cytoplasm. The catalysed reaction is 2-deoxy-alpha-D-ribose 1-phosphate = 2-deoxy-D-ribose 5-phosphate. It catalyses the reaction alpha-D-ribose 1-phosphate = D-ribose 5-phosphate. Its pathway is carbohydrate degradation; 2-deoxy-D-ribose 1-phosphate degradation; D-glyceraldehyde 3-phosphate and acetaldehyde from 2-deoxy-alpha-D-ribose 1-phosphate: step 1/2. Functionally, isomerase that catalyzes the conversion of deoxy-ribose 1-phosphate (dRib-1-P) and ribose 1-phosphate (Rib-1-P) to deoxy-ribose 5-phosphate (dRib-5-P) and ribose 5-phosphate (Rib-5-P), respectively. The polypeptide is Phosphopentomutase (Aliivibrio fischeri (strain ATCC 700601 / ES114) (Vibrio fischeri)).